The following is a 202-amino-acid chain: 3-isopropylmalate dehydratase small subunit (202 aa).

The protein belongs to the LeuD family. LeuD type 1 subfamily. Heterodimer of LeuC and LeuD.

It carries out the reaction (2R,3S)-3-isopropylmalate = (2S)-2-isopropylmalate. Its pathway is amino-acid biosynthesis; L-leucine biosynthesis; L-leucine from 3-methyl-2-oxobutanoate: step 2/4. Its function is as follows. Catalyzes the isomerization between 2-isopropylmalate and 3-isopropylmalate, via the formation of 2-isopropylmaleate. The sequence is that of 3-isopropylmalate dehydratase small subunit from Paenarthrobacter aurescens (strain TC1).